The chain runs to 674 residues: DNA ligase (674 aa).

Residues 42-46, 91-92, and Glu121 contribute to the NAD(+) site; these read DNVYD and SM. Lys123 acts as the N6-AMP-lysine intermediate in catalysis. Arg144, Glu178, Lys294, and Lys318 together coordinate NAD(+). Cys412, Cys415, Cys430, and Cys435 together coordinate Zn(2+). The BRCT domain maps to 596–674; that stretch reads VKDSFVAGKT…ETELLANLKD (79 aa).

This sequence belongs to the NAD-dependent DNA ligase family. LigA subfamily. Requires Mg(2+) as cofactor. It depends on Mn(2+) as a cofactor.

It catalyses the reaction NAD(+) + (deoxyribonucleotide)n-3'-hydroxyl + 5'-phospho-(deoxyribonucleotide)m = (deoxyribonucleotide)n+m + AMP + beta-nicotinamide D-nucleotide.. In terms of biological role, DNA ligase that catalyzes the formation of phosphodiester linkages between 5'-phosphoryl and 3'-hydroxyl groups in double-stranded DNA using NAD as a coenzyme and as the energy source for the reaction. It is essential for DNA replication and repair of damaged DNA. The chain is DNA ligase from Lacticaseibacillus paracasei (strain ATCC 334 / BCRC 17002 / CCUG 31169 / CIP 107868 / KCTC 3260 / NRRL B-441) (Lactobacillus paracasei).